Reading from the N-terminus, the 805-residue chain is MSLLHIAVLLPLIFALIIPFVYRFYKRIHLGWFVLPIPVVLFIYFLSYISTTMSGNTIMEKANWMPHFGMNFNLYVDGLGLLFSLLITGIGCLIVLYSISYLSRQEQLGHFYCYLLLFMGAMLGLVLSDNLIILYLFWELTSFSSFLLISFWRDKQASIYGAQKSMLVTVFGGLSLLGGIILLSIAGGTTSIQELINNASEIQTSPFFIFSMILVLIGAMTKSAQFPFYVWLPDAMEAPTPVSAYLHSATMVKAGLYLVARMTPIFAVSQGWIWTVTAVGLITLFWASLNATKQQDLKGILAFSTVSQLGMIMAMLGVGAVSFHFEGAESQIYIAAFTAAIFHLINHATFKGALFMITGAVDHSTGTRDVKKLGGLLTIMPISFTITLITSLSMAGIPPFNGFLSKEKFLESMIEVTNVNLFSLDTLGILIPITAIIGSVFTFVYSIRFIGQIFLGSYKEDKLPKKAHEVSPLMLISPSILAILVIVFGLFPAILSGSIIEPAVNAIGQTTNSTAEFHMFHGFTPAFFSTLGIYIVGIVLIITFSYWIYLLQKQPTKLTINYWYNKFGDVTPRYSSKFTDTYVTGFTRNNLVIIFASLIVIALVTLLVTPFNIDFKDVSAIRPFELIIVVLIITAASMIIFAKSRLFSIIMASAVGYSVAIFFIFFGAPDLALTQFVVESISTALFLLCFYHLPNLNRHKETRSFKLVNIVISVGAGIVVTVLGLIAYGNRHFGSIAEFYKTHVYDLAHGTNMVNVILVDFRGTDTLFESSVLGIAGLGVYTMIKLRAKNDKSDEGGKNVEQTEE.

20 helical membrane-spanning segments follow: residues Met-1 to Val-21, Leu-30 to Ser-50, Leu-79 to Ile-99, Leu-117 to Phe-137, Met-166 to Ala-186, Glu-201 to Thr-221, Phe-226 to Leu-246, Ile-265 to Phe-285, Ile-300 to Ala-320, Phe-337 to Ile-357, Leu-377 to Ile-397, Leu-427 to Ile-447, Ile-480 to Ile-500, Leu-531 to Leu-551, Leu-591 to Phe-611, Pro-623 to Lys-643, Leu-646 to Phe-666, Leu-671 to Tyr-691, Leu-707 to Ala-727, and Thr-766 to Leu-786.

Belongs to the CPA3 antiporters (TC 2.A.63) subunit A family. As to quaternary structure, may form a heterooligomeric complex that consists of seven subunits: mnhA1, mnhB1, mnhC1, mnhD1, mnhE1, mnhF1 and mnhG1.

It localises to the cell membrane. In terms of biological role, mnh complex is a Na(+)/H(+) antiporter involved in Na(+) excretion. The polypeptide is Na(+)/H(+) antiporter subunit A1 (mnhA1) (Staphylococcus saprophyticus subsp. saprophyticus (strain ATCC 15305 / DSM 20229 / NCIMB 8711 / NCTC 7292 / S-41)).